A 456-amino-acid chain; its full sequence is Exodeoxyribonuclease 7 large subunit (456 aa).

The protein belongs to the XseA family. Heterooligomer composed of large and small subunits.

The protein localises to the cytoplasm. It carries out the reaction Exonucleolytic cleavage in either 5'- to 3'- or 3'- to 5'-direction to yield nucleoside 5'-phosphates.. Functionally, bidirectionally degrades single-stranded DNA into large acid-insoluble oligonucleotides, which are then degraded further into small acid-soluble oligonucleotides. This Lactobacillus delbrueckii subsp. bulgaricus (strain ATCC 11842 / DSM 20081 / BCRC 10696 / JCM 1002 / NBRC 13953 / NCIMB 11778 / NCTC 12712 / WDCM 00102 / Lb 14) protein is Exodeoxyribonuclease 7 large subunit.